The chain runs to 1887 residues: Bifunctional serine/threonine-protein kinase/NEDD4-like E3 ubiquitin-protein ligase (1887 aa).

Disordered regions lie at residues 19–55 (TPQVNLFNNSNNGGNNSNNGGNNSTPTLTKTPSTTNF) and 72–98 (TDNYNFNNNNNNNNNNNNNNNNNTKEN). Composition is skewed to low complexity over residues 26 to 54 (NNSNNGGNNSNNGGNNSTPTLTKTPSTTN) and 72 to 97 (TDNYNFNNNNNNNNNNNNNNNNNTKE). RCC1 repeat units lie at residues 206-260 (QGNL…ALTI), 262-314 (GKVY…NNNN), 356-409 (KGLL…VLTN), 411-470 (GLVF…AISD), 472-528 (NDTY…AMSI), and 529-581 (DGSL…IVEK). The interval 299–333 (NNNNNNNNNNSTNNNNNNNNDGAQQQFSLSQNSSS) is disordered. 3 disordered regions span residues 594 to 619 (LPSSTQSQQQTELSLPSSVNSSSDSN), 823 to 858 (VLVHQDEKQQQREKSETELEEEQDEEEEDSEIKNGT), and 1030 to 1088 (DDDN…NNNN). The span at 825-839 (VHQDEKQQQREKSET) shows a compositional bias: basic and acidic residues. The span at 840–852 (ELEEEQDEEEEDS) shows a compositional bias: acidic residues. The span at 1036–1088 (ENNSVNNNSNNNNNNNNNNNNNNNNNNNNNNNIDNNINSNSINDSSNNNNNNN) shows a compositional bias: low complexity. Residues 1158–1437 (YDIIKTLSTH…AHQIAVHPYF (280 aa)) enclose the Protein kinase domain. Residues 1164–1172 (LSTHPHNVY) and Lys-1184 each bind ATP. Asp-1281 (proton acceptor) is an active-site residue. In terms of domain architecture, HECT spans 1501 to 1887 (ESNKLFCRLE…LEYVDGFAFI (387 aa)). Residues 1586 to 1628 (NNNNNNEENNNNNNNNNNNNNNNNNNNNNNNNNNNNNNNNNEE) form a disordered region. Catalysis depends on Cys-1855, which acts as the Glycyl thioester intermediate.

This sequence in the N-terminal section; belongs to the protein kinase superfamily. Ser/Thr protein kinase family. It in the C-terminal section; belongs to the protein kinase superfamily. CAMK Ser/Thr protein kinase family.

The catalysed reaction is L-seryl-[protein] + ATP = O-phospho-L-seryl-[protein] + ADP + H(+). It carries out the reaction L-threonyl-[protein] + ATP = O-phospho-L-threonyl-[protein] + ADP + H(+). The enzyme catalyses S-ubiquitinyl-[E2 ubiquitin-conjugating enzyme]-L-cysteine + [acceptor protein]-L-lysine = [E2 ubiquitin-conjugating enzyme]-L-cysteine + N(6)-ubiquitinyl-[acceptor protein]-L-lysine.. It participates in protein modification; protein ubiquitination. In Dictyostelium discoideum (Social amoeba), this protein is Bifunctional serine/threonine-protein kinase/NEDD4-like E3 ubiquitin-protein ligase.